Reading from the N-terminus, the 442-residue chain is HTH-type transcriptional regulator NorG (442 aa).

Residues 2–46 enclose the HTH gntR-type domain; sequence KIPSHRQLAIQYNVNRVTIIKSIELLEAEGFIYTKVGSGTYVNDY. Positions 6-25 form a DNA-binding region, H-T-H motif; it reads HRQLAIQYNVNRVTIIKSIE. Residue Lys-288 is modified to N6-(pyridoxal phosphate)lysine.

It in the C-terminal section; belongs to the class-I pyridoxal-phosphate-dependent aminotransferase family. The cofactor is pyridoxal 5'-phosphate.

Positively regulates the expression of the NorB efflux pump and negatively regulates the expression of the AbcA efflux pump. Binds specifically to the promoters of norA, norB and norC and abcA genes. Could also have an aminotransferase activity. The sequence is that of HTH-type transcriptional regulator NorG (norG) from Staphylococcus aureus (strain USA300).